The sequence spans 965 residues: MSGSTKVLDPAFQGVGQKPGTEIWRIENFEPVPVPKSEHGKFYMGDTYIVLQTTQNKGGAYLFDIHFWIGKDTSQDEAGTAAVKTVELDAALGGRAVQYREIQGHESDKFLSYFKPCIIPLEGGVASGFKKPEEEEFETRLYTCKGKRAVHLKQVPFARSSLNHDDVFILDTKEKIYQFNGANSNIQERAKALVVIQYLKDKFHEGTSDVAIVDDGKLDTESDSGEFWVLFGGFAPIARKVASEDEIIPETTPPKLYSIADGQVESIDGDLSKSMLENNKCYLLDCGSEIFIWVGRVTQVEERKTAIQAAEDFVASENRPKATRITRVIQGYEPHSFKSNFDSWPSGSATPANEEGRGKVAALLKQQGVGLKGLSKSTPVNEDIPPLLEGGGKLEVWYIDANSKTVLSKDHVGKLYSGDCYLVLYTYHSGERKEDYFLCCWFGKNSNQEDQETAVRLASTMTNSLKGRPVQARIFEGKEPPQFVALFQHMVVLKGGLSSGYKNSMTEKGSSGETYTPESIALIQVSGTGVHNNKALQVEAVATSLNSYDCFLLQSGTSMFLWVGNHSTHEQQELAAKVAEFLKPGTTIKHAKEGTESSSFWFALGGKQNFTSKKVSSETVRDPHLFSFSFNRGKFQVEEIHNFDQDDLLTEEMHLLDTHAEVFVWVGQCVDPKEKQTAFEIGQRYINLAGSLEGLSPKVPLYKITEGNEPCFFTTYFSWDSTKATVQGNSYQKKAALLLGTHHVVEDQSSSGNQGPRQRAAALAALTSAFNSSSGRTSSPSRDRSNGSQGGPRQRAEALAALTSAFNSSPSSKSPPRRSGLTSQASQRAAAVAALSQVLTAEKKKSPDTSPSAEAKDEKAFSEVEATEEATEAKEEEEVSPAAEASAEEAKPKQDDSEVETTGVTFTYERLQAKSEKPVTGIDFKRREAYLSEVEFKTVFGMEKESFYKLPGWKQDLLKKKFNLF.

6 Gelsolin-like repeats span residues 27–79 (ENFE…DEAG), 150–190 (VHLK…QERA), 262–304 (GQVE…EERK), 401–452 (ANSK…EDQE), 533–573 (NKAL…EQQE), and 635–676 (FQVE…KEKQ). Low complexity-rich tracts occupy residues 769-780 (AFNSSSGRTSSP) and 808-828 (SSPS…ASQR). 2 disordered regions span residues 769-828 (AFNS…ASQR) and 840-906 (TAEK…GVTF). Positions 865-879 (EATEEATEAKEEEEV) are enriched in acidic residues. Position 880 is a phosphoserine (S880). In terms of domain architecture, HP spans 900–965 (ETTGVTFTYE…DLLKKKFNLF (66 aa)).

It belongs to the villin/gelsolin family. Expressed in all tissues examined, including root hairs.

Its subcellular location is the cytoplasm. It localises to the cytoskeleton. Binds actin and actin filament bundles in a Ca(2+)-insensitive manner, but severs actin filaments in a calcium-dependent manner, regardless of the presence or not of VLN1 (AC O81643). Acts redundantly with VLN2 (AC O81644) to generate thick actin filament bundles, to regulate directional organ growth and in sclerenchyma development. In Arabidopsis thaliana (Mouse-ear cress), this protein is Villin-3.